The chain runs to 472 residues: Uronate isomerase (472 aa).

This sequence belongs to the metallo-dependent hydrolases superfamily. Uronate isomerase family.

The catalysed reaction is D-glucuronate = D-fructuronate. It carries out the reaction aldehydo-D-galacturonate = keto-D-tagaturonate. The protein operates within carbohydrate metabolism; pentose and glucuronate interconversion. The protein is Uronate isomerase of Xanthomonas axonopodis pv. citri (strain 306).